Reading from the N-terminus, the 492-residue chain is Phosphatidylglycerol--prolipoprotein diacylglyceryl transferase (492 aa).

Transmembrane regions (helical) follow at residues 40-60 (IFGI…YVGW), 72-92 (AIRQ…VVVP), 106-126 (VAVR…VGLA), 133-153 (AGLG…GGLL), 184-204 (QGGL…LIAL), 214-234 (IGDV…LGCL), 361-381 (VWGT…VLLI), 409-429 (GVLM…LEWI), and 441-461 (LSIS…TLFI). Arg230 is a binding site for a 1,2-diacyl-sn-glycero-3-phospho-(1'-sn-glycerol).

Belongs to the Lgt family.

It is found in the cell inner membrane. It catalyses the reaction L-cysteinyl-[prolipoprotein] + a 1,2-diacyl-sn-glycero-3-phospho-(1'-sn-glycerol) = an S-1,2-diacyl-sn-glyceryl-L-cysteinyl-[prolipoprotein] + sn-glycerol 1-phosphate + H(+). It participates in protein modification; lipoprotein biosynthesis (diacylglyceryl transfer). Its function is as follows. Catalyzes the transfer of the diacylglyceryl group from phosphatidylglycerol to the sulfhydryl group of the N-terminal cysteine of a prolipoprotein, the first step in the formation of mature lipoproteins. This is Phosphatidylglycerol--prolipoprotein diacylglyceryl transferase from Rhodopirellula baltica (strain DSM 10527 / NCIMB 13988 / SH1).